We begin with the raw amino-acid sequence, 464 residues long: MDSSNLSSSMPQEGQLKLTEEAIITIKQVDESSAKRSVSNESRKSKDVTRKEQIASDQQGDDQCPQSDTAKDKKTEFKQDEVPNSNGKSIPTFHPCNNIGINDFNHQHYSRVCRNGIDINLIVVGESSLGKTTFVNSFLQSNDTNFRPKKTMDFVEHKATLSDGDQKFNLTIVDTPGFGDKSDNSNCWRPIATNLLHRLNAYFQNEVKMDRETSEIDSRIHGCLFFINPNGHRLQPLEIYIMKKIDQFVNIIPVIGKADTMTSDELNHFKKRVIADMVREKIRYFREPHNEKKAKIPIPFAIVGAGAPIEHDGKCIRGRAYPWGLVDIDDPKQSDFCQLRNFLLYTHIEGLKHKTHKLIYDTFRTEKLVALNATPGSQFISAEEMNQKYISEQTQLVEEALTKVMKEKYREKENNLELLETNLKTHHKDYKHALKKRITALEEEKNRLIKEIGPEKVKKAGILA.

The interval 28-91 (QVDESSAKRS…VPNSNGKSIP (64 aa)) is disordered. Basic and acidic residues-rich tracts occupy residues 41 to 54 (ESRK…KEQI) and 69 to 81 (TAKD…KQDE). Positions 115 to 370 (NGIDINLIVV…DTFRTEKLVA (256 aa)) constitute a Septin-type G domain. The segment at 125–132 (GESSLGKT) is G1 motif. GTP is bound by residues 125–132 (GESSLGKT), Thr151, Gly177, 257–265 (KADTMTSDE), Gly304, and Arg319. Residues 174-177 (DTPG) form a G3 motif region. Residues 256–259 (GKAD) form a G4 motif region. Positions 396–453 (LVEEALTKVMKEKYREKENNLELLETNLKTHHKDYKHALKKRITALEEEKNRLIKEIG) form a coiled coil.

Belongs to the TRAFAC class TrmE-Era-EngA-EngB-Septin-like GTPase superfamily. Septin GTPase family. In terms of assembly, component of the sporulation-specific septin complex composed of at least spn2, spn5, spn6 and spn7.

Its subcellular location is the nucleus. It is found in the forespore membrane. Septin-like protein involved in the correct orientation of forespore membrane extension during sporulation. The chain is Septin homolog spn5 (spn5) from Schizosaccharomyces pombe (strain 972 / ATCC 24843) (Fission yeast).